Reading from the N-terminus, the 3122-residue chain is Large tegument protein deneddylase (3122 aa).

The deubiquitination activity stretch occupies residues 1–248 (MIPAALPHPT…SETYLQDEPF (248 aa)). Residues 20–238 (VVTGVRNQFA…TAAALHLYGA (219 aa)) form the Peptidase C76 domain. Active-site residues include cysteine 40, aspartate 172, and histidine 174. Disordered regions lie at residues 281-367 (GSGP…GDAA) and 387-496 (RARY…PPGA). A compositionally biased stretch (low complexity) spans 343–353 (SAPDAAASGPP). Basic residues-rich tracts occupy residues 387–400 (RARY…RRRP) and 425–436 (KAKKKSAPKKKA). Residues 437-454 (PVAAEVPASSPTPIAATV) are compositionally biased toward low complexity. The tract at residues 548 to 578 (LELCVIFFFERVLAFLIENGARTHTQAGVAG) is interaction with inner tegument protein. Disordered regions lie at residues 2494–2539 (YQRP…ADPG), 2570–2974 (ASDD…THLP), and 3006–3059 (SDDE…SQFG). 2 stretches are compositionally biased toward pro residues: residues 2578–2590 (TPNP…PPPA) and 2637–2654 (PSPP…PPPA). Positions 2655–2667 (FSGSAAAFSAAVP) are enriched in low complexity. A compositionally biased stretch (basic residues) spans 2668–2681 (RVRRSRRTRAKSRA). Pro residues-rich tracts occupy residues 2690–2700 (GWRPPALPAPV) and 2710–2719 (PDQPPTPESA). Positions 2734–2743 (ASARGAFPAP) are enriched in low complexity. 2 stretches are compositionally biased toward pro residues: residues 2744 to 2753 (TLAPIPPPPA) and 2775 to 2785 (SPTPPRGPAAG). 2 stretches are compositionally biased toward low complexity: residues 2786 to 2807 (PPRR…SLPS) and 2814 to 2825 (HAAAVSAAAAAV). Over residues 2841 to 2852 (SPPPLAPGPVAP) the composition is skewed to pro residues. The segment covering 2853 to 2867 (SEPLCGWVVPGGPVA) has biased composition (low complexity). 11 consecutive repeat copies span residues 2891–2895 (PQPPL), 2896–2900 (PQPPL), 2901–2905 (PQPPL), 2906–2910 (PQPPL), 2911–2915 (PQPPL), 2916–2920 (PQPPL), 2921–2925 (PQPPL), 2926–2930 (PQPPL), 2931–2935 (PQPPL), 2936–2940 (PQPPL), and 2941–2945 (PQPPL). The tract at residues 2891–2945 (PQPPLPQPPLPQPPLPQPPLPQPPLPQPPLPQPPLPQPPLPQPPLPQPPLPQPPL) is 11 X 5 AA tandem repeats of P-Q-P-P-L. Residues 2891 to 2947 (PQPPLPQPPLPQPPLPQPPLPQPPLPQPPLPQPPLPQPPLPQPPLPQPPLPQPPLPP) show a composition bias toward pro residues. Polar residues-rich tracts occupy residues 2950-2959 (RTLTPQSRDS) and 2965-2974 (SPTHTNTHLP). Positions 3006–3020 (SDDEHSDADSLRFSD) are enriched in basic and acidic residues. A compositionally biased stretch (pro residues) spans 3029–3045 (PLPPEPHLPPADEPPGP).

It belongs to the herpesviridae large tegument protein family. Interacts with host CUL1 and CUL4A; these interactions inhibit the E3 ligase activity of cullins. Interacts with inner tegument protein. Interacts with capsid vertex specific component CVC2. Interacts with the major capsid protein/MCP. Post-translationally, proteolytically processed, possibly into several polypeptides. Enzymatic activity is only detectable following cleavage of the UL36 protein, which occurs late during viral replication.

The protein resides in the virion tegument. The protein localises to the host cytoplasm. It localises to the host nucleus. The catalysed reaction is Thiol-dependent hydrolysis of ester, thioester, amide, peptide and isopeptide bonds formed by the C-terminal Gly of ubiquitin (a 76-residue protein attached to proteins as an intracellular targeting signal).. Functionally, large tegument protein that plays multiple roles in the viral cycle. During viral entry, remains associated with the capsid while most of the tegument is detached and participates in the capsid transport toward the host nucleus. Plays a role in the routing of the capsid at the nuclear pore complex and subsequent uncoating. Within the host nucleus, acts as a deneddylase and promotes the degradation of nuclear CRLs (cullin-RING ubiquitin ligases) and thereby stabilizes nuclear CRL substrates, while cytoplasmic CRLs remain unaffected. These modifications prevent host cell cycle S-phase progression and create a favorable environment allowing efficient viral genome replication. Participates later in the secondary envelopment of capsids. Indeed, plays a linker role for the association of the outer viral tegument to the capsids together with the inner tegument protein. The chain is Large tegument protein deneddylase from Human herpesvirus 2 (strain HG52) (HHV-2).